A 124-amino-acid chain; its full sequence is Small ribosomal subunit protein uS10 (124 aa).

It belongs to the universal ribosomal protein uS10 family.

This Dictyostelium discoideum (Social amoeba) protein is Small ribosomal subunit protein uS10 (rps20).